Here is a 250-residue protein sequence, read N- to C-terminus: ATP synthase subunit a (250 aa).

A run of 6 helical transmembrane segments spans residues 29–49, 84–104, 114–134, 143–163, 189–209, and 216–236; these read ASLF…FATS, FFPM…LGMM, IVVT…YGFY, LFVP…IEVI, VFAG…GGAL, and VALT…FAVL.

It belongs to the ATPase A chain family. In terms of assembly, F-type ATPases have 2 components, CF(1) - the catalytic core - and CF(0) - the membrane proton channel. CF(1) has five subunits: alpha(3), beta(3), gamma(1), delta(1), epsilon(1). CF(0) has three main subunits: a(1), b(2) and c(9-12). The alpha and beta chains form an alternating ring which encloses part of the gamma chain. CF(1) is attached to CF(0) by a central stalk formed by the gamma and epsilon chains, while a peripheral stalk is formed by the delta and b chains.

The protein resides in the cell inner membrane. In terms of biological role, key component of the proton channel; it plays a direct role in the translocation of protons across the membrane. This is ATP synthase subunit a from Allorhizobium ampelinum (strain ATCC BAA-846 / DSM 112012 / S4) (Agrobacterium vitis (strain S4)).